The primary structure comprises 440 residues: C4-dicarboxylate transport protein (440 aa).

The next 8 membrane-spanning stretches (helical) occupy residues 8-28, 40-60, 74-94, 147-167, 187-207, 221-241, 288-308, and 354-374; these read LYLQVLLAVVLGALVGHLFPA, FIKLVKMLIAPIVFATVVTGI, LKGLLYFEVLTTVALAIGLVV, GDILQVLLFSVLFGAALAALK, IVGFVMRLAPVGAFGAMAFTV, LIACFYATSALFVVLMLGLVL, VVGLVVPMGYSFNLDGTSIYL, and AATLSAVGNIPVAGLALLLGV. A disordered region spans residues 419–440; the sequence is DEVEPANDPEPPAMAAGLGLHG.

It belongs to the dicarboxylate/amino acid:cation symporter (DAACS) (TC 2.A.23) family.

It is found in the cell inner membrane. Responsible for the transport of dicarboxylates such as succinate, fumarate, and malate from the periplasm across the membrane. The polypeptide is C4-dicarboxylate transport protein (Anaeromyxobacter dehalogenans (strain 2CP-C)).